The sequence spans 212 residues: Anaphase-promoting complex subunit 10 (212 aa).

Residues 12-196 enclose the DOC domain; it reads MDEEERTSSR…PSAVLEARPG (185 aa).

Belongs to the APC10 family. In terms of assembly, the APC/C complex is probably composed of at least 12 subunits: apc-2, apc-10, apc-11, cdc-26, emb-1, emb-27, emb-30, mat-1, mat-2, mat-3, such-1 and gfi-3.

The protein operates within protein modification; protein ubiquitination. In terms of biological role, probable component of the anaphase promoting complex/cyclosome (APC/C), a cell cycle-regulated E3 ubiquitin ligase that controls progression through mitosis and the G1 phase of the cell cycle. The APC/C complex acts by mediating ubiquitination and subsequent degradation of target proteins. This chain is Anaphase-promoting complex subunit 10, found in Caenorhabditis elegans.